A 424-amino-acid polypeptide reads, in one-letter code: CinA-like protein (424 aa).

Belongs to the CinA family.

This is CinA-like protein from Shewanella denitrificans (strain OS217 / ATCC BAA-1090 / DSM 15013).